Here is a 140-residue protein sequence, read N- to C-terminus: Ribonuclease P protein subunit p20 (140 aa).

It belongs to the histone-like Alba family. As to quaternary structure, component of nuclear RNase P and RNase MRP complexes. RNase P consists of a catalytic RNA moiety and 10 different protein chains; POP1, POP4, POP5, POP7, RPP14, RPP21, RPP25, RPP30, RPP38 and RPP40. Within the RNase P complex, POP1, POP7 and RPP25 form the 'finger' subcomplex, POP5, RPP14, RPP40 and homodimeric RPP30 form the 'palm' subcomplex, and RPP21, POP4 and RPP38 form the 'wrist' subcomplex. All subunits of the RNase P complex interact with the catalytic RNA. Several subunits of RNase P are also part of the RNase MRP complex. RNase MRP consists of a catalytic RNA moiety and about 8 protein subunits; POP1, POP7, RPP25, RPP30, RPP38, RPP40 and possibly also POP4 and POP5. Interacts with SMN1. POP7 forms a heterodimer with RPP25 that binds to the P3 stem loop of the catalytic RNA.

The protein resides in the nucleus. Its subcellular location is the nucleolus. It localises to the cytoplasm. The protein localises to the cytoplasmic granule. Its function is as follows. Component of ribonuclease P, a ribonucleoprotein complex that generates mature tRNA molecules by cleaving their 5'-ends. Also a component of the MRP ribonuclease complex, which cleaves pre-rRNA sequences. The protein is Ribonuclease P protein subunit p20 (POP7) of Homo sapiens (Human).